Here is a 110-residue protein sequence, read N- to C-terminus: MQAIAIHKFARGSAQKARLVADQIRGVNVEKALEILTFSNKKAAELVKKVLNSAIANAEHNEGADIDELFVKTILIDDGPTMKRIMPRAKGRADRIIKRTSHITVIVSDS.

It belongs to the universal ribosomal protein uL22 family. As to quaternary structure, part of the 50S ribosomal subunit.

Its function is as follows. This protein binds specifically to 23S rRNA; its binding is stimulated by other ribosomal proteins, e.g. L4, L17, and L20. It is important during the early stages of 50S assembly. It makes multiple contacts with different domains of the 23S rRNA in the assembled 50S subunit and ribosome. The globular domain of the protein is located near the polypeptide exit tunnel on the outside of the subunit, while an extended beta-hairpin is found that lines the wall of the exit tunnel in the center of the 70S ribosome. This is Large ribosomal subunit protein uL22 from Colwellia psychrerythraea (strain 34H / ATCC BAA-681) (Vibrio psychroerythus).